The chain runs to 141 residues: N,N-dimethylformamidase alpha subunit (141 aa).

Heterotetramer of two DmfA1 (alpha) and two DmfA2 (beta) subunits.

It carries out the reaction N,N-dimethylformamide + H2O = dimethylamine + formate. Functionally, hydrolyzes N,N-dimethylformamide, and to a lesser extent N,N-dimethylacetamide and N,N-diethylacetamide. Has no activity against the substituted amides N-methylformamide, N-ethylformamide, N-ethylformamide and N-methylacetamide or the unsubstituted amides formamide, nicotinamide, acetoamide, benzamide, acetamide and acrylamide. This chain is N,N-dimethylformamidase alpha subunit, found in Paracoccus aminophilus.